Reading from the N-terminus, the 203-residue chain is Holliday junction branch migration complex subunit RuvA (203 aa).

Residues methionine 1–leucine 63 are domain I. The tract at residues threonine 64–lysine 142 is domain II. Residues aspartate 143–asparagine 149 form a flexible linker region. Positions isoleucine 150 to leucine 203 are domain III.

It belongs to the RuvA family. Homotetramer. Forms an RuvA(8)-RuvB(12)-Holliday junction (HJ) complex. HJ DNA is sandwiched between 2 RuvA tetramers; dsDNA enters through RuvA and exits via RuvB. An RuvB hexamer assembles on each DNA strand where it exits the tetramer. Each RuvB hexamer is contacted by two RuvA subunits (via domain III) on 2 adjacent RuvB subunits; this complex drives branch migration. In the full resolvosome a probable DNA-RuvA(4)-RuvB(12)-RuvC(2) complex forms which resolves the HJ.

Its subcellular location is the cytoplasm. Functionally, the RuvA-RuvB-RuvC complex processes Holliday junction (HJ) DNA during genetic recombination and DNA repair, while the RuvA-RuvB complex plays an important role in the rescue of blocked DNA replication forks via replication fork reversal (RFR). RuvA specifically binds to HJ cruciform DNA, conferring on it an open structure. The RuvB hexamer acts as an ATP-dependent pump, pulling dsDNA into and through the RuvAB complex. HJ branch migration allows RuvC to scan DNA until it finds its consensus sequence, where it cleaves and resolves the cruciform DNA. In Rickettsia felis (strain ATCC VR-1525 / URRWXCal2) (Rickettsia azadi), this protein is Holliday junction branch migration complex subunit RuvA.